Consider the following 448-residue polypeptide: Doublesex- and mab-3-related transcription factor A2 (448 aa).

Residues 57–104 (CARCRNHGVVSALKGHKRYCRWKDCMCAKCTLIAERQRVMAAQVALRR) constitute a DNA-binding region (DM). Positions 166–187 (SQLSGSATPQQSVGKPASTESD) are enriched in polar residues. A disordered region spans residues 166–259 (SQLSGSATPQ…SPSSAASRHM (94 aa)). Positions 229–239 (GSVSSLGSDSG) are enriched in low complexity. Positions 259-294 (MNAIDILTRVFPSHKRSVQELVLQGCGKDVVRAIEQ) constitute a DMA domain.

The protein belongs to the DMRT family.

The protein resides in the nucleus. Its function is as follows. May be involved in sexual development. This Monopterus albus (Swamp eel) protein is Doublesex- and mab-3-related transcription factor A2 (dmrta2).